A 384-amino-acid chain; its full sequence is Chaperone protein DnaJ 1 (384 aa).

A J domain is found at 4–68 (DYYGLLGVAR…EKRRIVDMGG (65 aa)). The CR-type zinc finger occupies 133–215 (GVTKHLTVDT…CGGDGRVRAR (83 aa)). Zn(2+) contacts are provided by Cys146, Cys149, Cys163, Cys166, Cys189, Cys192, Cys203, and Cys206. 4 CXXCXGXG motif repeats span residues 146-153 (CDACHGSG), 163-170 (CETCGGAG), 189-196 (CPTCRGAG), and 203-210 (CHKCGGDG).

Belongs to the DnaJ family. As to quaternary structure, homodimer. Requires Zn(2+) as cofactor.

Its subcellular location is the cytoplasm. In terms of biological role, participates actively in the response to hyperosmotic and heat shock by preventing the aggregation of stress-denatured proteins and by disaggregating proteins, also in an autonomous, DnaK-independent fashion. Unfolded proteins bind initially to DnaJ; upon interaction with the DnaJ-bound protein, DnaK hydrolyzes its bound ATP, resulting in the formation of a stable complex. GrpE releases ADP from DnaK; ATP binding to DnaK triggers the release of the substrate protein, thus completing the reaction cycle. Several rounds of ATP-dependent interactions between DnaJ, DnaK and GrpE are required for fully efficient folding. Also involved, together with DnaK and GrpE, in the DNA replication of plasmids through activation of initiation proteins. This chain is Chaperone protein DnaJ 1, found in Nocardia farcinica (strain IFM 10152).